Reading from the N-terminus, the 204-residue chain is Inactive ribonuclease-like protein 9 (204 aa).

The first 26 residues, 1–26, serve as a signal peptide directing secretion; that stretch reads MMRTLITTHPLLLLLLLQQLLQPVQL. 3 disulfides stabilise this stretch: Cys-97–Cys-152, Cys-115–Cys-167, and Cys-122–Cys-129. Asn-130 and Asn-142 each carry an N-linked (GlcNAc...) asparagine glycan.

This sequence belongs to the pancreatic ribonuclease family.

It localises to the secreted. Its function is as follows. Does not exhibit any ribonuclease activity. This chain is Inactive ribonuclease-like protein 9 (RNASE9), found in Chlorocebus pygerythrus (Vervet monkey).